A 134-amino-acid chain; its full sequence is Retinol-binding protein 2 (134 aa).

2 residues coordinate all-trans-retinol: Lys-41 and Gln-109.

The protein belongs to the calycin superfamily. Fatty-acid binding protein (FABP) family. In terms of tissue distribution, expressed in prenatal liver, intestine and lung, and in adult intestine.

The protein localises to the cytoplasm. Intracellular transport of retinol. In Mus musculus (Mouse), this protein is Retinol-binding protein 2 (Rbp2).